Consider the following 461-residue polypeptide: UDP-glycosyltransferase 88B1 (461 aa).

UDP-alpha-D-glucose contacts are provided by residues S278, 340 to 341 (WA), 358 to 366 (HCGWNSSLE), and 380 to 383 (YAEQ).

This sequence belongs to the UDP-glycosyltransferase family.

Functionally, may glycosylate diterpenes or flavonols in leaves. This is UDP-glycosyltransferase 88B1 from Stevia rebaudiana (Stevia).